The following is a 131-amino-acid chain: Translation initiation factor 5A (131 aa).

Residue Lys-36 is modified to Hypusine.

Belongs to the eIF-5A family.

The protein localises to the cytoplasm. Functionally, functions by promoting the formation of the first peptide bond. This chain is Translation initiation factor 5A, found in Saccharolobus solfataricus (strain ATCC 35092 / DSM 1617 / JCM 11322 / P2) (Sulfolobus solfataricus).